The chain runs to 223 residues: Putative synaptogyrin-2 like protein (223 aa).

Methionine 1 carries the post-translational modification N-acetylmethionine. The residue at position 3 (serine 3) is a Phosphoserine. The MARVEL domain occupies 20–170; the sequence is FLTQPQVVAR…LASLTYQRYK (151 aa). Helical transmembrane passes span 26 to 46, 71 to 91, 104 to 124, and 146 to 166; these read VVAR…IYGE, GSAI…DAYF, VIGD…GFCF, and AAIT…SLTY. The segment at 197–223 is disordered; sequence ASVDNYQQPPFTQNAETTEGYQPPPVY. A compositionally biased stretch (polar residues) spans 200–216; the sequence is DNYQQPPFTQNAETTEG.

Belongs to the synaptogyrin family.

Its subcellular location is the membrane. The polypeptide is Putative synaptogyrin-2 like protein (Homo sapiens (Human)).